The sequence spans 657 residues: Zinc transporter ZIP4 (657 aa).

An N-terminal signal peptide occupies residues 1 to 22 (MMLPKSLTQGLLLAMLVGTAAM). The Extracellular segment spans residues 23–335 (VQPYHLLSLL…QDQLSQAERY (313 aa)). 3 N-linked (GlcNAc...) asparagine glycosylation sites follow: asparagine 193, asparagine 220, and asparagine 268. Residues 336-356 (LYGSLATLLICLCAVFGLLLL) traverse the membrane as a helical segment. The Cytoplasmic segment spans residues 357-374 (TCAKCSTATHYIMQTFLS). A helical transmembrane segment spans residues 375–395 (LAVGALTGDALLHLIPKVLGL). Residues 396-417 (HTHSGEVHSHEEESIGGQSTWR) lie on the Extracellular side of the membrane. The chain crosses the membrane as a helical span at residues 418–438 (LLAVLGGFYIFFLFESFFNLL). At 439-508 (LPRDQDHEKD…LRAELRMLPY (70 aa)) the chain is on the cytoplasmic side. The Essential for SLC39A4 endocytosis motif lies at 462–464 (LQL). Positions 467–491 (SNLRQSKQPHESSRSDLVTEETPEL) are disordered. The chain crosses the membrane as a helical span at residues 509-528 (LITLGDAVHNFADGLAVGAA). 3 residues coordinate Zn(2+): histidine 517, asparagine 518, and aspartate 521. The Extracellular segment spans residues 529–536 (FSSTWKTG). A helical transmembrane segment spans residues 537–563 (LATSLAVFCHELPHELGDFAALLHAGL). Zn(2+)-binding residues include histidine 546, glutamate 547, and histidine 550. Residues 564-568 (TVKRA) lie on the Cytoplasmic side of the membrane. The helical transmembrane segment at 569–589 (LLLNLASALTAFAGLYVALAV) threads the bilayer. At 590 to 597 (GVGEEGET) the chain is on the extracellular side. A helical membrane pass occupies residues 598-618 (WILAVATGLFLYVALCDMLPA). At 619 to 627 (MMNVRDQRP) the chain is on the cytoplasmic side. Residues 628–648 (WLLFLLHNVGLLGGWTILLLL) traverse the membrane as a helical segment. Residues 649-657 (SLYEDSITF) are Extracellular-facing.

This sequence belongs to the ZIP transporter (TC 2.A.5) family. As to quaternary structure, homodimer; homodimerization is mediated by the transmembrane domain. The extracellular N-terminal ectodomain is cleaved when cells are Zn(2+) deficient, N-terminally cleaved SLC39A4 is internalized at a faster rate. In terms of processing, under excess Zn(2+) conditions, SLC39A4 on the cell surface is rapidly endocytosed, ubiquitinated and degraded. Post-translationally, glycosylated. As to expression, expressed in duodenum, jejunum, and ileum.

Its subcellular location is the cell membrane. The protein localises to the recycling endosome membrane. It localises to the apical cell membrane. The enzyme catalyses Zn(2+)(in) = Zn(2+)(out). Its function is as follows. Selective transporter that mediates the uptake of Zn(2+). Plays an essential role for dietary zinc uptake from small intestine. The Zn(2+) uniporter activity is regulated by zinc availability. Also exhibits polyspecific binding and transport of Cu(2+), Cd(2+) and possibly Ni(2+) but at higher concentrations. The sequence is that of Zinc transporter ZIP4 (Slc39a4) from Rattus norvegicus (Rat).